We begin with the raw amino-acid sequence, 285 residues long: Probable xyloglucan endotransglucosylase/hydrolase protein 12 (285 aa).

Positions 1–25 are cleaved as a signal peptide; it reads MAAFATKQSPLLLASLLILIGVATG. Residues 26–215 enclose the GH16 domain; sequence SFYDSFDITW…WTNAPFSASY (190 aa). The active-site Nucleophile is the Glu-101. Glu-105 functions as the Proton donor in the catalytic mechanism. Glu-105 contacts xyloglucan. Residue Asn-109 is glycosylated (N-linked (GlcNAc...) asparagine). Residues 118-120, 128-130, 194-195, and Gly-199 contribute to the xyloglucan site; these read HTN, NRE, and DW. 2 cysteine pairs are disulfide-bonded: Cys-224/Cys-235 and Cys-268/Cys-282. Arg-273 contacts xyloglucan.

It belongs to the glycosyl hydrolase 16 family. XTH group 2 subfamily. In terms of processing, contains at least one intrachain disulfide bond essential for its enzymatic activity. Root specific.

The protein resides in the secreted. The protein localises to the cell wall. It localises to the extracellular space. Its subcellular location is the apoplast. It catalyses the reaction breaks a beta-(1-&gt;4) bond in the backbone of a xyloglucan and transfers the xyloglucanyl segment on to O-4 of the non-reducing terminal glucose residue of an acceptor, which can be a xyloglucan or an oligosaccharide of xyloglucan.. Catalyzes xyloglucan endohydrolysis (XEH) and/or endotransglycosylation (XET). Cleaves and religates xyloglucan polymers, an essential constituent of the primary cell wall, and thereby participates in cell wall construction of growing tissues. The chain is Probable xyloglucan endotransglucosylase/hydrolase protein 12 (XTH12) from Arabidopsis thaliana (Mouse-ear cress).